The sequence spans 72 residues: Small ribosomal subunit protein eS31 (72 aa).

C32, C35, C51, and C54 together coordinate Zn(2+). The C4-type zinc finger occupies 32–54 (CPRCGSVMAYHKEPVPRWHCGKC).

The protein belongs to the eukaryotic ribosomal protein eS31 family. In terms of assembly, part of the 30S ribosomal subunit. The cofactor is Zn(2+).

This Caldivirga maquilingensis (strain ATCC 700844 / DSM 13496 / JCM 10307 / IC-167) protein is Small ribosomal subunit protein eS31.